We begin with the raw amino-acid sequence, 147 residues long: Cytochrome b-c1 complex subunit 6, mitochondrial (147 aa).

The tract at residues Ala-25–Glu-89 is disordered. Residues Glu-41–Leu-78 show a composition bias toward acidic residues. Residues Glu-79–Glu-89 show a composition bias toward basic and acidic residues. Residues Cys-101 and Cys-123 are joined by a disulfide bond.

It belongs to the UQCRH/QCR6 family. As to quaternary structure, component of the ubiquinol-cytochrome c oxidoreductase (cytochrome b-c1 complex, complex III, CIII), a multisubunit enzyme composed of 10 subunits. The complex is composed of 3 respiratory subunits cytochrome b (COB), cytochrome c1 (CYT1) and Rieske protein (RIP1), 2 core protein subunits COR1 and QCR2, and 5 low-molecular weight protein subunits QCR6, QCR7, QCR8, QCR9 and QCR10. The complex exists as an obligatory dimer and forms supercomplexes (SCs) in the inner mitochondrial membrane with a monomer or a dimer of cytochrome c oxidase (complex IV, CIV), resulting in 2 different assemblies (supercomplexes III(2)IV and III(2)IV(2)). QCR6 interacts with COX5A at the CIII-CIV interface.

The protein localises to the mitochondrion inner membrane. Functionally, component of the ubiquinol-cytochrome c oxidoreductase, a multisubunit transmembrane complex that is part of the mitochondrial electron transport chain which drives oxidative phosphorylation. The respiratory chain contains 3 multisubunit complexes succinate dehydrogenase (complex II, CII), ubiquinol-cytochrome c oxidoreductase (cytochrome b-c1 complex, complex III, CIII) and cytochrome c oxidase (complex IV, CIV), that cooperate to transfer electrons derived from NADH and succinate to molecular oxygen, creating an electrochemical gradient over the inner membrane that drives transmembrane transport and the ATP synthase. The cytochrome b-c1 complex catalyzes electron transfer from ubiquinol to cytochrome c, linking this redox reaction to translocation of protons across the mitochondrial inner membrane, with protons being carried across the membrane as hydrogens on the quinol. In the process called Q cycle, 2 protons are consumed from the matrix, 4 protons are released into the intermembrane space and 2 electrons are passed to cytochrome c. This chain is Cytochrome b-c1 complex subunit 6, mitochondrial (QCR6), found in Saccharomyces cerevisiae (strain ATCC 204508 / S288c) (Baker's yeast).